The primary structure comprises 199 residues: Protein-methionine-sulfoxide reductase heme-binding subunit MsrQ (199 aa).

The next 5 helical transmembrane spans lie at 8 to 28, 82 to 102, 116 to 136, 149 to 169, and 171 to 191; these read ITWLKVILHLAGLLPFIWLFW, LWCFAWATLHLTSYALLELGI, PYLTLGIVSWVILFALTLTST, FLHNFVYLVAILTPIHYLWSV, and ILSPQPVIYALLALGLLAWRY.

The protein belongs to the MsrQ family. As to quaternary structure, heterodimer of a catalytic subunit (MsrP) and a heme-binding subunit (MsrQ). It depends on FMN as a cofactor. Heme b serves as cofactor.

The protein resides in the cell inner membrane. Functionally, part of the MsrPQ system that repairs oxidized periplasmic proteins containing methionine sulfoxide residues (Met-O), using respiratory chain electrons. Thus protects these proteins from oxidative-stress damage caused by reactive species of oxygen and chlorine generated by the host defense mechanisms. MsrPQ is essential for the maintenance of envelope integrity under bleach stress, rescuing a wide series of structurally unrelated periplasmic proteins from methionine oxidation. MsrQ provides electrons for reduction to the reductase catalytic subunit MsrP, using the quinone pool of the respiratory chain. The sequence is that of Protein-methionine-sulfoxide reductase heme-binding subunit MsrQ from Enterobacter sp. (strain 638).